Consider the following 307-residue polypeptide: MNHYKDFISNLIENLGSENVKTNELMKNHTSFKVGGPVDILVTPESYEQVQYVIKHSRGNNIPYFIMGNGSNLLVRDGGIRGLVIKFCKLNRIKIEDDKIIAQSGVLLSKVSNMAAKNNLEGLEFASGIPGSIGGALTMNAGAYNGEISQVIDSALVLDKSGEILNLSKEELELGYRTSSILKNGYVVLEAILKLSLGDSKNIYDRIKELTEKRKTKQPLEYPSAGSTFKRPQGYFAAKLIEESGLKGINVGDAEVSQKHSGFIINKGNASAKDILNVINIVQDTVKSKFDVELHTEVLIIGEDKLN.

In terms of domain architecture, FAD-binding PCMH-type spans 33-198 (KVGGPVDILV…LEAILKLSLG (166 aa)). Arginine 177 is an active-site residue. The active-site Proton donor is serine 227. The active site involves glutamate 297.

This sequence belongs to the MurB family. It depends on FAD as a cofactor.

The protein localises to the cytoplasm. It catalyses the reaction UDP-N-acetyl-alpha-D-muramate + NADP(+) = UDP-N-acetyl-3-O-(1-carboxyvinyl)-alpha-D-glucosamine + NADPH + H(+). The protein operates within cell wall biogenesis; peptidoglycan biosynthesis. In terms of biological role, cell wall formation. The protein is UDP-N-acetylenolpyruvoylglucosamine reductase of Clostridium tetani (strain Massachusetts / E88).